A 209-amino-acid chain; its full sequence is Imidazoleglycerol-phosphate dehydratase (209 aa).

The protein belongs to the imidazoleglycerol-phosphate dehydratase family.

Its subcellular location is the cytoplasm. It catalyses the reaction D-erythro-1-(imidazol-4-yl)glycerol 3-phosphate = 3-(imidazol-4-yl)-2-oxopropyl phosphate + H2O. It participates in amino-acid biosynthesis; L-histidine biosynthesis; L-histidine from 5-phospho-alpha-D-ribose 1-diphosphate: step 6/9. The chain is Imidazoleglycerol-phosphate dehydratase from Microcystis aeruginosa (strain NIES-843 / IAM M-2473).